A 163-amino-acid polypeptide reads, in one-letter code: Peptidyl-prolyl cis-trans isomerase (163 aa).

One can recognise a PPIase cyclophilin-type domain in the interval 5–162 (YFDVSSNGKP…SVLKIEDCGT (158 aa)).

Belongs to the cyclophilin-type PPIase family. PPIase A subfamily.

The protein resides in the cytoplasm. The catalysed reaction is [protein]-peptidylproline (omega=180) = [protein]-peptidylproline (omega=0). Its activity is regulated as follows. Binds cyclosporin A (CsA). CsA mediates some of its effects via an inhibitory action on PPIase. Its function is as follows. PPIases accelerate the folding of proteins. It catalyzes the cis-trans isomerization of proline imidic peptide bonds in oligopeptides. This is Peptidyl-prolyl cis-trans isomerase (PIG28) from Uromyces fabae (Rust fungus).